The chain runs to 1073 residues: DNA-directed RNA polymerase subunit beta (1073 aa).

Belongs to the RNA polymerase beta chain family. In terms of assembly, in plastids the minimal PEP RNA polymerase catalytic core is composed of four subunits: alpha, beta, beta', and beta''. When a (nuclear-encoded) sigma factor is associated with the core the holoenzyme is formed, which can initiate transcription.

The protein resides in the plastid. It localises to the chloroplast. It catalyses the reaction RNA(n) + a ribonucleoside 5'-triphosphate = RNA(n+1) + diphosphate. DNA-dependent RNA polymerase catalyzes the transcription of DNA into RNA using the four ribonucleoside triphosphates as substrates. In Aethionema cordifolium (Lebanon stonecress), this protein is DNA-directed RNA polymerase subunit beta.